Consider the following 329-residue polypeptide: MASQLTDAFARKFYYLRLSVTDVCNFRCTYCLPDGYKPAGVTNKGFLSLDEIRRVTRAFANLGTEKVRLTGGEPSLRRDFCDIIAAVRENPSIRQIAVTTNGYRLARDVAQWREAGLTAVNVSVDSLDARQFHAITGQDKFRQVMAGIDAAFDAGFEKVKVNTVLMRDVNHHQLDTFLNWIQSRPIQLRFIELMETGEGSDLFRKHHISGATIRDELLKRGWIHQLRSRADGPAQVFCHPDYQGEIGLIMPYEKDFCASCNRLRVSSVGKLHLCLFGDGGVDLRDLLAEEGQQAALMARIETALLGKKQTHFLHQGNTGITQNLSYIGG.

The Radical SAM core domain maps to 8–234 (AFARKFYYLR…QLRSRADGPA (227 aa)). A GTP-binding site is contributed by Arg-17. Cys-24 and Cys-28 together coordinate [4Fe-4S] cluster. Tyr-30 serves as a coordination point for S-adenosyl-L-methionine. Residue Cys-31 coordinates [4Fe-4S] cluster. Arg-68 provides a ligand contact to GTP. Residue Gly-72 coordinates S-adenosyl-L-methionine. A GTP-binding site is contributed by Thr-99. Ser-123 contacts S-adenosyl-L-methionine. Lys-160 contributes to the GTP binding site. Met-194 provides a ligand contact to S-adenosyl-L-methionine. Residues Cys-257 and Cys-260 each coordinate [4Fe-4S] cluster. Residue 262-264 (RLR) participates in GTP binding. Residue Cys-274 coordinates [4Fe-4S] cluster.

Belongs to the radical SAM superfamily. MoaA family. As to quaternary structure, monomer and homodimer. [4Fe-4S] cluster serves as cofactor.

It carries out the reaction GTP + AH2 + S-adenosyl-L-methionine = (8S)-3',8-cyclo-7,8-dihydroguanosine 5'-triphosphate + 5'-deoxyadenosine + L-methionine + A + H(+). It participates in cofactor biosynthesis; molybdopterin biosynthesis. In terms of biological role, catalyzes the cyclization of GTP to (8S)-3',8-cyclo-7,8-dihydroguanosine 5'-triphosphate. The chain is GTP 3',8-cyclase from Cronobacter sakazakii (strain ATCC BAA-894) (Enterobacter sakazakii).